A 75-amino-acid polypeptide reads, in one-letter code: Penaeidin-3m (75 aa).

An N-terminal signal peptide occupies residues 1–19 (MRLVVCLVFLASFALVCQG). At Gln20 the chain carries Pyrrolidone carboxylic acid. Disulfide bonds link Cys44–Cys59, Cys48–Cys66, and Cys60–Cys67. Ser74 carries the serine amide modification.

It belongs to the penaeidin family.

It is found in the cytoplasmic granule. In terms of biological role, antibacterial and antifungal activity. Presents chitin-binding activity. This Penaeus setiferus (Atlantic white shrimp) protein is Penaeidin-3m.